The sequence spans 501 residues: Myrosinase MA1 (501 aa).

3 disulfides stabilise this stretch: Cys6-Cys438, Cys14-Cys434, and Cys206-Cys214. N-linked (GlcNAc...) asparagine glycosylation occurs at Asn21. Residue Gln39 coordinates substrate. His56 lines the Zn(2+) pocket. Asn60 is a glycosylation site (N-linked (GlcNAc...) asparagine). Residue Asp70 coordinates Zn(2+). N-linked (GlcNAc...) asparagine glycosylation occurs at Asn90. Residues His141 and Asn186 each contribute to the substrate site. Gln187 serves as a coordination point for L-ascorbate. Residues Asn218 and Asn244 are each glycosylated (N-linked (GlcNAc...) asparagine). Arg259 is a binding site for L-ascorbate. N-linked (GlcNAc...) asparagine glycosylation is found at Asn265 and Asn292. Tyr330 lines the substrate pocket. 3 N-linked (GlcNAc...) asparagine glycosylation sites follow: Asn343, Asn346, and Asn361. The Nucleophile role is filled by Glu409. Residues Trp457 and Glu464 to Phe465 each bind substrate. Asn482 carries N-linked (GlcNAc...) asparagine glycosylation.

Belongs to the glycosyl hydrolase 1 family. As to quaternary structure, homodimer. As to expression, in vacuoles called myrosin grains of a certain class of cells, myrosin cells, distributed in the cotyledons and the axis of the embryo as well as in different organs of the growing plant.

The protein localises to the vacuole. The catalysed reaction is a thioglucoside + H2O = a sugar + a thiol.. Degradation of glucosinolates (glucose residue linked by a thioglucoside bound to an amino acid derivative) to glucose, sulfate and any of the products: thiocyanates, isothiocyanates, nitriles, epithionitriles or oxazolidine-2-thiones. This is Myrosinase MA1 from Sinapis alba (White mustard).